We begin with the raw amino-acid sequence, 180 residues long: Crossover junction endodeoxyribonuclease RuvC (180 aa).

Active-site residues include D9, E74, and D146. Residues D9, E74, and D146 each contribute to the Mg(2+) site.

Belongs to the RuvC family. As to quaternary structure, homodimer which binds Holliday junction (HJ) DNA. The HJ becomes 2-fold symmetrical on binding to RuvC with unstacked arms; it has a different conformation from HJ DNA in complex with RuvA. In the full resolvosome a probable DNA-RuvA(4)-RuvB(12)-RuvC(2) complex forms which resolves the HJ. Mg(2+) is required as a cofactor.

It localises to the cytoplasm. It carries out the reaction Endonucleolytic cleavage at a junction such as a reciprocal single-stranded crossover between two homologous DNA duplexes (Holliday junction).. Its function is as follows. The RuvA-RuvB-RuvC complex processes Holliday junction (HJ) DNA during genetic recombination and DNA repair. Endonuclease that resolves HJ intermediates. Cleaves cruciform DNA by making single-stranded nicks across the HJ at symmetrical positions within the homologous arms, yielding a 5'-phosphate and a 3'-hydroxyl group; requires a central core of homology in the junction. The consensus cleavage sequence is 5'-(A/T)TT(C/G)-3'. Cleavage occurs on the 3'-side of the TT dinucleotide at the point of strand exchange. HJ branch migration catalyzed by RuvA-RuvB allows RuvC to scan DNA until it finds its consensus sequence, where it cleaves and resolves the cruciform DNA. This Methylobacillus flagellatus (strain ATCC 51484 / DSM 6875 / VKM B-1610 / KT) protein is Crossover junction endodeoxyribonuclease RuvC.